The sequence spans 271 residues: Phosphate import ATP-binding protein PstB (271 aa).

The 243-residue stretch at 24-266 folds into the ABC transporter domain; that stretch reads MIGNDVSVYY…PDDQRTQDYI (243 aa). 56–63 serves as a coordination point for ATP; that stretch reads GPSGCGKS.

This sequence belongs to the ABC transporter superfamily. Phosphate importer (TC 3.A.1.7) family. As to quaternary structure, the complex is composed of two ATP-binding proteins (PstB), two transmembrane proteins (PstC and PstA) and a solute-binding protein (PstS).

It localises to the cell inner membrane. It catalyses the reaction phosphate(out) + ATP + H2O = ADP + 2 phosphate(in) + H(+). In terms of biological role, part of the ABC transporter complex PstSACB involved in phosphate import. Responsible for energy coupling to the transport system. This chain is Phosphate import ATP-binding protein PstB, found in Rhizobium meliloti (strain 1021) (Ensifer meliloti).